Consider the following 470-residue polypeptide: Argininosuccinate lyase (470 aa).

The protein belongs to the lyase 1 family. Argininosuccinate lyase subfamily.

The protein localises to the cytoplasm. It carries out the reaction 2-(N(omega)-L-arginino)succinate = fumarate + L-arginine. It functions in the pathway amino-acid biosynthesis; L-arginine biosynthesis; L-arginine from L-ornithine and carbamoyl phosphate: step 3/3. This Mycobacterium marinum (strain ATCC BAA-535 / M) protein is Argininosuccinate lyase.